Consider the following 901-residue polypeptide: Protein translocase subunit SecA (901 aa).

ATP-binding positions include Q87, 105–109 (GEGKT), and D512. Residues 859–901 (HQDDDSAAAAALAAQTGERKVGRNDPCPCGSGKKYKQCHGRLQ) form a disordered region. Residues C885, C887, C896, and H897 each coordinate Zn(2+). Positions 891-901 (KKYKQCHGRLQ) are enriched in basic residues.

The protein belongs to the SecA family. Monomer and homodimer. Part of the essential Sec protein translocation apparatus which comprises SecA, SecYEG and auxiliary proteins SecDF-YajC and YidC. It depends on Zn(2+) as a cofactor.

It is found in the cell inner membrane. Its subcellular location is the cytoplasm. It carries out the reaction ATP + H2O + cellular proteinSide 1 = ADP + phosphate + cellular proteinSide 2.. Its function is as follows. Part of the Sec protein translocase complex. Interacts with the SecYEG preprotein conducting channel. Has a central role in coupling the hydrolysis of ATP to the transfer of proteins into and across the cell membrane, serving both as a receptor for the preprotein-SecB complex and as an ATP-driven molecular motor driving the stepwise translocation of polypeptide chains across the membrane. The sequence is that of Protein translocase subunit SecA from Shigella dysenteriae serotype 1 (strain Sd197).